We begin with the raw amino-acid sequence, 162 residues long: Phosphopantetheine adenylyltransferase (162 aa).

Position 9 (Ser9) interacts with substrate. ATP contacts are provided by residues Ser9–Phe10 and His17. Positions 41, 73, and 87 each coordinate substrate. Residues Gly88 to Arg90, Glu98, and Cys123 to Ser129 contribute to the ATP site.

This sequence belongs to the bacterial CoaD family. Homohexamer. The cofactor is Mg(2+).

It localises to the cytoplasm. The enzyme catalyses (R)-4'-phosphopantetheine + ATP + H(+) = 3'-dephospho-CoA + diphosphate. It participates in cofactor biosynthesis; coenzyme A biosynthesis; CoA from (R)-pantothenate: step 4/5. Its function is as follows. Reversibly transfers an adenylyl group from ATP to 4'-phosphopantetheine, yielding dephospho-CoA (dPCoA) and pyrophosphate. This chain is Phosphopantetheine adenylyltransferase, found in Natranaerobius thermophilus (strain ATCC BAA-1301 / DSM 18059 / JW/NM-WN-LF).